Consider the following 203-residue polypeptide: Outer-membrane lipoprotein LolB (203 aa).

The N-terminal stretch at 1-17 (MNRLFRLLPLASLVLTA) is a signal peptide. Cys18 carries the N-palmitoyl cysteine lipid modification. Cys18 carries the S-diacylglycerol cysteine lipid modification.

Belongs to the LolB family. Monomer.

The protein resides in the cell outer membrane. Plays a critical role in the incorporation of lipoproteins in the outer membrane after they are released by the LolA protein. The protein is Outer-membrane lipoprotein LolB of Klebsiella pneumoniae subsp. pneumoniae (strain ATCC 700721 / MGH 78578).